The following is a 154-amino-acid chain: UPF0260 protein HI_1355 (154 aa).

The protein belongs to the UPF0260 family.

The protein is UPF0260 protein HI_1355 of Haemophilus influenzae (strain ATCC 51907 / DSM 11121 / KW20 / Rd).